We begin with the raw amino-acid sequence, 359 residues long: Aspartate carbamoyltransferase catalytic subunit (359 aa).

The carbamoyl phosphate site is built by Arg-52 and Thr-53. Residue Lys-81 participates in L-aspartate binding. Residues Arg-102, His-130, and Gln-133 each coordinate carbamoyl phosphate. Residues Arg-163 and Arg-224 each contribute to the L-aspartate site. Carbamoyl phosphate is bound by residues Leu-264 and Pro-265.

Belongs to the aspartate/ornithine carbamoyltransferase superfamily. ATCase family. In terms of assembly, heterododecamer (2C3:3R2) of six catalytic PyrB chains organized as two trimers (C3), and six regulatory PyrI chains organized as three dimers (R2).

It carries out the reaction carbamoyl phosphate + L-aspartate = N-carbamoyl-L-aspartate + phosphate + H(+). It functions in the pathway pyrimidine metabolism; UMP biosynthesis via de novo pathway; (S)-dihydroorotate from bicarbonate: step 2/3. In terms of biological role, catalyzes the condensation of carbamoyl phosphate and aspartate to form carbamoyl aspartate and inorganic phosphate, the committed step in the de novo pyrimidine nucleotide biosynthesis pathway. The chain is Aspartate carbamoyltransferase catalytic subunit from Brachyspira hyodysenteriae (strain ATCC 49526 / WA1).